The following is an 88-amino-acid chain: Small ribosomal subunit protein uS15 (88 aa).

It belongs to the universal ribosomal protein uS15 family. Part of the 30S ribosomal subunit. Forms a bridge to the 50S subunit in the 70S ribosome, contacting the 23S rRNA.

Its function is as follows. One of the primary rRNA binding proteins, it binds directly to 16S rRNA where it helps nucleate assembly of the platform of the 30S subunit by binding and bridging several RNA helices of the 16S rRNA. Forms an intersubunit bridge (bridge B4) with the 23S rRNA of the 50S subunit in the ribosome. This is Small ribosomal subunit protein uS15 from Borreliella burgdorferi (strain ATCC 35210 / DSM 4680 / CIP 102532 / B31) (Borrelia burgdorferi).